The sequence spans 501 residues: Aldehyde dehydrogenase 1A1 (501 aa).

Ser2 is subject to N-acetylserine. N6-acetyllysine occurs at positions 91 and 128. NAD(+)-binding positions include 167 to 170 (IPWN), 193 to 196 (KPAE), 226 to 227 (GP), and 246 to 247 (GS). Lys252 carries the post-translational modification N6-acetyllysine. Glu269 (proton acceptor) is an active-site residue. NAD(+) is bound at residue 269–271 (ELG). The active-site Nucleophile is the Cys303. A mediates interaction with PRMT3 region spans residues 336–501 (LTPGVSQGPQ…VTIKISQKNS (166 aa)). Phosphothreonine is present on Thr337. An NAD(+)-binding site is contributed by 349–353 (EQYEK). N6-acetyllysine occurs at positions 353 and 367. An NAD(+)-binding site is contributed by 400 to 402 (EIF). Lys410 bears the N6-acetyllysine mark. Ser413 carries the post-translational modification Phosphoserine. Lys419 and Lys495 each carry N6-acetyllysine.

This sequence belongs to the aldehyde dehydrogenase family. Homotetramer. Interacts with PRMT3; the interaction is direct, inhibits ALDH1A1 aldehyde dehydrogenase activity and is independent of the methyltransferase activity of PRMT3. Post-translationally, the N-terminus is blocked most probably by acetylation. In terms of tissue distribution, expressed in muscle, liver, small intestine, kidney, brain, lung, heart but not detected in erythrocytes (at protein level).

Its subcellular location is the cytoplasm. It is found in the cytosol. It localises to the cell projection. The protein resides in the axon. It carries out the reaction an aldehyde + NAD(+) + H2O = a carboxylate + NADH + 2 H(+). It catalyses the reaction all-trans-retinal + NAD(+) + H2O = all-trans-retinoate + NADH + 2 H(+). The enzyme catalyses 9-cis-retinal + NAD(+) + H2O = 9-cis-retinoate + NADH + 2 H(+). The catalysed reaction is 11-cis-retinal + NAD(+) + H2O = 11-cis-retinoate + NADH + 2 H(+). It carries out the reaction 13-cis-retinal + NAD(+) + H2O = 13-cis-retinoate + NADH + 2 H(+). It catalyses the reaction 3-deoxyglucosone + NAD(+) + H2O = 2-dehydro-3-deoxy-D-gluconate + NADH + 2 H(+). The enzyme catalyses (E)-4-hydroxynon-2-enal + NAD(+) + H2O = (E)-4-hydroxynon-2-enoate + NADH + 2 H(+). The catalysed reaction is malonaldehyde + NAD(+) + H2O = 3-oxopropanoate + NADH + 2 H(+). It carries out the reaction hexanal + NAD(+) + H2O = hexanoate + NADH + 2 H(+). It catalyses the reaction propanal + NAD(+) + H2O = propanoate + NADH + 2 H(+). The enzyme catalyses acetaldehyde + NAD(+) + H2O = acetate + NADH + 2 H(+). The catalysed reaction is benzaldehyde + NAD(+) + H2O = benzoate + NADH + 2 H(+). It carries out the reaction 4-aminobutanal + NAD(+) + H2O = 4-aminobutanoate + NADH + 2 H(+). Its pathway is cofactor metabolism; retinol metabolism. In terms of biological role, cytosolic dehydrogenase that catalyzes the irreversible oxidation of a wide range of aldehydes to their corresponding carboxylic acid. Functions downstream of retinol dehydrogenases and catalyzes the oxidation of retinaldehyde into retinoic acid, the second step in the oxidation of retinol/vitamin A into retinoic acid. This pathway is crucial to control the levels of retinol and retinoic acid, two important molecules which excess can be teratogenic and cytotoxic. Also oxidizes aldehydes resulting from lipid peroxidation like (E)-4-hydroxynon-2-enal/HNE, malonaldehyde and hexanal that form protein adducts and are highly cytotoxic. By participating for instance to the clearance of (E)-4-hydroxynon-2-enal/HNE in the lens epithelium prevents the formation of HNE-protein adducts and lens opacification. Also functions downstream of fructosamine-3-kinase in the fructosamine degradation pathway by catalyzing the oxidation of 3-deoxyglucosone, the carbohydrate product of fructosamine 3-phosphate decomposition, which is itself a potent glycating agent that may react with lysine and arginine side-chains of proteins. Also has an aminobutyraldehyde dehydrogenase activity and is probably part of an alternative pathway for the biosynthesis of GABA/4-aminobutanoate in midbrain, thereby playing a role in GABAergic synaptic transmission. In Bos taurus (Bovine), this protein is Aldehyde dehydrogenase 1A1.